Here is a 394-residue protein sequence, read N- to C-terminus: Potassium channel subfamily K member 18 (394 aa).

Over 1–31 (MEAEEPPEARRCCPEALGKARGCCPEALGKL) the chain is Cytoplasmic. A helical transmembrane segment spans residues 32-52 (LPGLCFLCCLVTYALVGAALF). Asparagine 83 carries an N-linked (GlcNAc...) asparagine glycan. Residues 114-140 (FLSALFFCCTVFSTVGYGHMYPVTRLG) constitute an intramembrane region (pore-forming). K(+)-binding residues include threonine 127, valine 128, glycine 129, and tyrosine 130. The segment at 127–132 (TVGYGH) is selectivity filter 1. The chain crosses the membrane as a helical span at residues 142–162 (FLCMLYALFGIPLMFLVLTDI). The Cytoplasmic portion of the chain corresponds to 163–292 (GDILATILSR…EVGQQVERLD (130 aa)). The segment at 210-215 (PQIVID) is interaction with calcineurin. The interval 261–266 (RSNSCP) is interaction with YWHAH. Phosphoserine occurs at positions 264 and 276. Residues 293–313 (IPLPVIALVVFAYISCAAAIL) form a helical membrane-spanning segment. The pore-forming intramembrane region spans 326–340 (FYFCFVTLTTIGFGD). Residues 335-340 (TIGFGD) are selectivity filter 2. A helical transmembrane segment spans residues 347-367 (HFFLFFSIYIIVGMEILFIAF). At 368–394 (KLMQNRLLHTYKTLMLFVCQREVSLPW) the chain is on the cytoplasmic side.

Belongs to the two pore domain potassium channel (TC 1.A.1.8) family. Homodimer. Heterodimer with KCNK2. Heterodimer with KCNK10. Interacts with calcineurin. Interacts with YWHAH, in a phosphorylation-dependent manner. Phosphorylation of Ser-264 is required for the binding of 14-3-3eta/YWHAH. Calcineurin-mediated dephosphorylation of Ser-276 enhances channel activity. Post-translationally, N-glycosylated. In terms of tissue distribution, detected in brain cortex, cerebellum, dorsal root ganglion, spinal cord and testis. High expression in trigeminal ganglion (at protein level), also expressed in autonomic nervous system ganglia such as the stellate ganglion and paravertebral sympathetic ganglia. Expressed in all adult spinal cord and brain regions, with slightly higher expression in thalamus, hypothalamus, hippocampus and posterior corte (at protein level). In non-neuronal tissues, substantial expression found in lung and heart and weal expression in liver, testis, kidney, small intestine and spleen. Expressed in regulatory T cells (at protein level).

Its subcellular location is the cell membrane. It carries out the reaction K(+)(in) = K(+)(out). Its activity is regulated as follows. Activated upon cell stimulation via Ca(2+)-mobilizing receptors, such as CHRM1/M1 muscarinic receptor and AGTR1/AT1a angiotensin receptor. Activated by volatile anesthetics, such as isoflurane and inhibited by local anesthetics such as bupivacaine and lidocaine. Inhibited by extracellular acidic pH. Inhibited by Zn(2+) ions. Inhibited by hydroxy-alpha-sanshool, an ingredient of Schezuan pepper. Inhibited by Ba(2+) ions. K(+) channel that conducts outward and inward rectifying currents at depolarized and hyperpolarized membrane potentials, respectively. The outward rectifying currents are voltage-dependent, coupled to K(+) electrochemical gradient across the membrane, whereas the inward currents can be induced in response to activation of Ca(2+)-mobilizing receptors. Homo- and heterodimerizes to form functional channels with distinct regulatory and gating properties. In trigeminal ganglia sensory neurons, the heterodimers of KCNK18/TRESK and KCNK2/TREK-1 or KCNK10/TREK-2 inhibit neuronal firing and neurogenic inflammation by stabilizing the resting membrane potential at K(+) equilibrium potential as well as by regulating the threshold of action potentials and the spike frequency. In thymocytes, conducts K(+) currents upon T cell receptor (TCR) signaling leading to sustained Ca(2+) influx and NF-kappa-B activation, FOXP3 transcription and positive selection of regulatory T cell (Treg) progenitor subsets. Appears to mediate the analgesics effects of hydroxy-alpha-sanshool, a metabolite naturally present in Schezuan pepper and other Xanthoxylum plants. In Mus musculus (Mouse), this protein is Potassium channel subfamily K member 18.